The following is a 150-amino-acid chain: Flagellar assembly factor FliW (150 aa).

Belongs to the FliW family. As to quaternary structure, interacts with translational regulator CsrA. Interacts with flagellins FlaB1, FlaB2 and FlaB3.

The protein localises to the cytoplasm. Acts as an anti-CsrA protein, binds CsrA and prevents it from repressing translation of its target genes, one of which is flagellin. Binds to flagellin and participates in the assembly of the flagellum. In terms of biological role, binds to the C-terminal region of flagellin, which is implicated in polymerization, and participates in the assembly of the flagellum. In Treponema pallidum (strain Nichols), this protein is Flagellar assembly factor FliW.